Reading from the N-terminus, the 261-residue chain is Protein FAM216A (261 aa).

Residues 1 to 52 (MPSRCPGVAGPPALARTEGSEGSAGQSYHQNSKGTGEQHKAERIKEGHRMSS) are disordered. Over residues 23-35 (SAGQSYHQNSKGT) the composition is skewed to polar residues. Positions 36-49 (GEQHKAERIKEGHR) are enriched in basic and acidic residues.

This sequence belongs to the FAM216 family.

This chain is Protein FAM216A (Fam216a), found in Rattus norvegicus (Rat).